We begin with the raw amino-acid sequence, 472 residues long: Protein c-ets-2-A (472 aa).

A PNT domain is found at 85–170 (NTFNGFAKKR…EHLEEMMKEH (86 aa)). The ETS DNA-binding region spans 366–446 (IQLWQFLLEL…SGKRYVYRFV (81 aa)).

This sequence belongs to the ETS family.

The protein localises to the nucleus. Its function is as follows. Probable transcription factor. This is Protein c-ets-2-A (ets2-a) from Xenopus laevis (African clawed frog).